We begin with the raw amino-acid sequence, 323 residues long: MSFASETKKELTHMDVSDSDAKVELAAFIRMNGAISFSNQLVIMDVQTENAAIARRMYQLLKDLYEVPIELLVRRKMKLKKNNVYIVRLKSGTRGILEDLRILEPPMTFTKSIDRGFVKKRSAKRAYLRGAFLASGSVNNPETSSYHLEIFSVYEEHNEAICALMNQFDLNARTLERKNGFITYLKEAEKITEFLSIIGATSALLHFEDVRIMRDMRNSVNRLVNCETANLNKTINAAVRQIDNIKYIQSTVGLEALPERLREIAALRIANEDVTLKELGEMLTTGQVSKSGINHRLRKLDQIAERLRSGETPAQVGLKVSNS.

The H-T-H motif DNA-binding region spans Thr-275–Ser-309.

It belongs to the WhiA family.

In terms of biological role, involved in cell division and chromosome segregation. In Listeria innocua serovar 6a (strain ATCC BAA-680 / CLIP 11262), this protein is Probable cell division protein WhiA.